A 258-amino-acid polypeptide reads, in one-letter code: Axonemal dynein light intermediate polypeptide 1 (258 aa).

Disordered regions lie at residues 19–60 (RNTE…CVPD) and 207–231 (VNEQKAKCEATEKRESERRQVEEKK). The segment covering 34–48 (SPQQPGPSGSAPQLP) has biased composition (low complexity). Positions 176 to 255 (MRKALQAEQG…LKAQLEGIIA (80 aa)) form a coiled coil.

It belongs to the inner dynein arm light chain family. Interacts with CFAP45. Interacts with DYNC1H1.

The protein localises to the cell projection. It is found in the cilium. It localises to the flagellum. The protein resides in the dynein axonemal particle. Its subcellular location is the cytoplasm. Functionally, involved in sperm flagellum assembly. This is Axonemal dynein light intermediate polypeptide 1 (DNALI1) from Macaca fascicularis (Crab-eating macaque).